The sequence spans 85 residues: UPF0297 protein Clos_1665 (85 aa).

It belongs to the UPF0297 family.

This Alkaliphilus oremlandii (strain OhILAs) (Clostridium oremlandii (strain OhILAs)) protein is UPF0297 protein Clos_1665.